We begin with the raw amino-acid sequence, 122 residues long: uncharacterized protein (122 aa).

A signal peptide spans 1-28; that stretch reads MVPGPPESVVRFFLWFCFLLPPTRKASC. An N-linked (GlcNAc...) asparagine glycan is attached at asparagine 49.

The protein resides in the secreted. This is an uncharacterized protein from Homo sapiens (Human).